A 185-amino-acid polypeptide reads, in one-letter code: Ribosome-recycling factor (185 aa).

Positions 142 to 164 (IKKDGDAGEDDVTRAEKDLDKST) are enriched in basic and acidic residues. Residues 142 to 173 (IKKDGDAGEDDVTRAEKDLDKSTHQYTSQVDD) are disordered.

The protein belongs to the RRF family.

Its subcellular location is the cytoplasm. Functionally, responsible for the release of ribosomes from messenger RNA at the termination of protein biosynthesis. May increase the efficiency of translation by recycling ribosomes from one round of translation to another. This chain is Ribosome-recycling factor, found in Mycolicibacterium gilvum (strain PYR-GCK) (Mycobacterium gilvum (strain PYR-GCK)).